Consider the following 245-residue polypeptide: Uracil-DNA glycosylase (245 aa).

D82 (proton acceptor) is an active-site residue.

The protein belongs to the uracil-DNA glycosylase (UDG) superfamily. UNG family.

The protein resides in the cytoplasm. It carries out the reaction Hydrolyzes single-stranded DNA or mismatched double-stranded DNA and polynucleotides, releasing free uracil.. Excises uracil residues from the DNA which can arise as a result of misincorporation of dUMP residues by DNA polymerase or due to deamination of cytosine. The sequence is that of Uracil-DNA glycosylase from Deinococcus geothermalis (strain DSM 11300 / CIP 105573 / AG-3a).